The sequence spans 101 residues: MMFEHVLVLSVYLFSIGIYGLITSRNMVRALMCLDLILNSVNMNLVTFSDLFDSRQLKGDIFSIFVIAVAAAEAAIGLAIVSSIYRNRKSTRINQSNLLNN.

2 helical membrane-spanning segments follow: residues 2-22 (MFEH…YGLI) and 61-81 (IFSI…LAIV).

Belongs to the complex I subunit 4L family. As to quaternary structure, NDH is composed of at least 16 different subunits, 5 of which are encoded in the nucleus.

The protein localises to the plastid. Its subcellular location is the chloroplast thylakoid membrane. The catalysed reaction is a plastoquinone + NADH + (n+1) H(+)(in) = a plastoquinol + NAD(+) + n H(+)(out). It carries out the reaction a plastoquinone + NADPH + (n+1) H(+)(in) = a plastoquinol + NADP(+) + n H(+)(out). In terms of biological role, NDH shuttles electrons from NAD(P)H:plastoquinone, via FMN and iron-sulfur (Fe-S) centers, to quinones in the photosynthetic chain and possibly in a chloroplast respiratory chain. The immediate electron acceptor for the enzyme in this species is believed to be plastoquinone. Couples the redox reaction to proton translocation, and thus conserves the redox energy in a proton gradient. This is NAD(P)H-quinone oxidoreductase subunit 4L, chloroplastic from Dioscorea elephantipes (Elephant's foot yam).